Here is a 400-residue protein sequence, read N- to C-terminus: Carnosine N-methyltransferase (400 aa).

The tract at residues 1 to 51 (MQRRQRAPPASQPAQDGGRSEDVEVQFSAGRLGSAAPAGPPARGTAEDEER) is disordered. A compositionally biased stretch (low complexity) spans 28 to 44 (SAGRLGSAAPAGPPARG). Positions 155, 158, 199, 220, 286, 287, and 303 each coordinate S-adenosyl-L-methionine. Residue aspartate 307 coordinates carnosine. An S-adenosyl-L-methionine-binding site is contributed by tyrosine 315. Residues histidine 338 and tyrosine 389 each contribute to the carnosine site.

Belongs to the carnosine N-methyltransferase family. Homodimer. Each monomer accommodates one molecule of carnosine in its active pocket, precisely anchoring the histidine imidazole ring such that only N1 is exposed and deprotonated for methylation.

It is found in the cytoplasm. The protein resides in the cytosol. It localises to the nucleus. It carries out the reaction carnosine + S-adenosyl-L-methionine = anserine + S-adenosyl-L-homocysteine + H(+). Its function is as follows. N-methyltransferase that catalyzes the formation of anserine (beta-alanyl-N(Pi)-methyl-L-histidine) from carnosine. Anserine, a methylated derivative of carnosine (beta-alanyl-L-histidine), is an abundant constituent of vertebrate skeletal muscles. Also methylates other L-histidine-containing di- and tripeptides such as Gly-Gly-His, Gly-His and homocarnosine (GABA-His). This chain is Carnosine N-methyltransferase, found in Mus musculus (Mouse).